Here is a 201-residue protein sequence, read N- to C-terminus: MSKVLVLKSSILAGYSQSGQLSDYFVEQWREKHPADAITVRDLAANPVPVLDGELVGALRPSDAPLTPRQQDALALSDELIAELQAHDVIVIAAPMYNFNIPTQLKNYFDLVARAGVTFRYTEKGPEGLVTGKRAVILSSRGGIHKDTPTDLIAPYLKVFLGFIGITDVNFVFAEGIAYGPEVAAKAQSDAKAAIDSVVAA.

FMN contacts are provided by residues Ser10, 16-18 (SQS), 96-99 (MYNF), and 140-143 (SRGG).

This sequence belongs to the azoreductase type 1 family. As to quaternary structure, homodimer. FMN is required as a cofactor.

It catalyses the reaction 2 a quinone + NADH + H(+) = 2 a 1,4-benzosemiquinone + NAD(+). The catalysed reaction is N,N-dimethyl-1,4-phenylenediamine + anthranilate + 2 NAD(+) = 2-(4-dimethylaminophenyl)diazenylbenzoate + 2 NADH + 2 H(+). In terms of biological role, quinone reductase that provides resistance to thiol-specific stress caused by electrophilic quinones. Its function is as follows. Also exhibits azoreductase activity. Catalyzes the reductive cleavage of the azo bond in aromatic azo compounds to the corresponding amines. The protein is FMN-dependent NADH:quinone oxidoreductase of Citrobacter koseri (strain ATCC BAA-895 / CDC 4225-83 / SGSC4696).